We begin with the raw amino-acid sequence, 393 residues long: MSRTNYTFTSESVSEGHPDKVCDRISDAVLDALIAEEPEARVAAETFATTNRVVIGGEVGLSDQAKLKDYMGKIDEIARACIKDIGYEQDKFHHETVEITNLLHEQSAHIAQGVDAAGDKDEGAGDQGIMFGFATDETDALMPAPIQFSHAILRRLAEVRKNGTLPVLGPDAKSQISVRYDAGKPVEVTSLVLSTQHLDEKLTSADIRALVEPYIRETLPEGWLTDNTVWHVNPTGKFVIGGPDGDAGLTGRKIIVDTYGGAAPHGGGAFSGKDPTKVDRSAAYAARYLAKNVVAAGLAHKCTLQLSYAIGVAAPLSIYVNTHDTGAVPDENIETAIRKCMDLTPRGIRTHLGLNKPIYQRTAAYGHFGRAPEADGGFSWERTDLTEALKGAV.

His-17 provides a ligand contact to ATP. Asp-19 is a binding site for Mg(2+). Position 45 (Glu-45) interacts with K(+). Residues Glu-58 and Gln-106 each contribute to the L-methionine site. The tract at residues 106–116 (QSAHIAQGVDA) is flexible loop. ATP-binding positions include 171-173 (DAK), 237-238 (KF), Asp-246, 252-253 (RK), Ala-269, and Lys-273. An L-methionine-binding site is contributed by Asp-246. Lys-277 contributes to the L-methionine binding site.

This sequence belongs to the AdoMet synthase family. As to quaternary structure, homotetramer; dimer of dimers. The cofactor is Mg(2+). Requires K(+) as cofactor.

Its subcellular location is the cytoplasm. The catalysed reaction is L-methionine + ATP + H2O = S-adenosyl-L-methionine + phosphate + diphosphate. It participates in amino-acid biosynthesis; S-adenosyl-L-methionine biosynthesis; S-adenosyl-L-methionine from L-methionine: step 1/1. In terms of biological role, catalyzes the formation of S-adenosylmethionine (AdoMet) from methionine and ATP. The overall synthetic reaction is composed of two sequential steps, AdoMet formation and the subsequent tripolyphosphate hydrolysis which occurs prior to release of AdoMet from the enzyme. The sequence is that of S-adenosylmethionine synthase from Ruegeria sp. (strain TM1040) (Silicibacter sp.).